The chain runs to 539 residues: 3-methylmercaptopropionyl-CoA ligase (539 aa).

Threonine 185 provides a ligand contact to Mg(2+). The ATP site is built by histidine 231, glycine 303, histidine 324, alanine 325, and serine 329. Glutamate 330 is a Mg(2+) binding site. 4 residues coordinate ATP: glutamine 359, aspartate 417, arginine 432, and lysine 523.

It belongs to the ATP-dependent AMP-binding enzyme family. In terms of assembly, homodimer. The cofactor is Mg(2+).

It catalyses the reaction 3-(methylsulfanyl)propanoate + ATP + CoA = 3-(methylsulfanyl)propanoyl-CoA + AMP + diphosphate. The protein operates within lipid metabolism; fatty acid metabolism. Activated by LiCl and NH(4)Cl. Inhibited by dimethylsulfoniopropionate (DMSP). MMPA concentrations above 2 mM relieve the DMSP inhibition and 80% of activity is regained at an MMPA concentration of 8 mM. In terms of biological role, involved in the assimilation of dimethylsulphoniopropionate (DMSP), an important compound in the fixation of carbon in marine phytoplankton. Catalyzes the ATP-dependent ligation of methylmercaptopropionate (MMPA) and CoA to yield methylmercaptopropionate-CoA (MMPA-CoA). It is also active with short-chain-fatty-acid (carboxylic acids up to six carbons in length). This is 3-methylmercaptopropionyl-CoA ligase from Ruegeria pomeroyi (strain ATCC 700808 / DSM 15171 / DSS-3) (Silicibacter pomeroyi).